Here is a 1183-residue protein sequence, read N- to C-terminus: DNA-directed RNA polymerase subunit beta (1183 aa).

It belongs to the RNA polymerase beta chain family. The RNAP catalytic core consists of 2 alpha, 1 beta, 1 beta' and 1 omega subunit. When a sigma factor is associated with the core the holoenzyme is formed, which can initiate transcription.

The enzyme catalyses RNA(n) + a ribonucleoside 5'-triphosphate = RNA(n+1) + diphosphate. DNA-dependent RNA polymerase catalyzes the transcription of DNA into RNA using the four ribonucleoside triphosphates as substrates. This Staphylococcus aureus (strain MRSA252) protein is DNA-directed RNA polymerase subunit beta.